A 324-amino-acid polypeptide reads, in one-letter code: Serine carboxypeptidase II-1 (324 aa).

N-linked (GlcNAc...) asparagine glycosylation occurs at Asn10. The active site involves Ser41. 2 disulfide bridges follow: Cys109/Cys121 and Cys145/Cys170. Positions 150 to 162 (LHRRRLIKGRRPW) are cleaved as a propeptide — linker peptide. Asn191 is a glycosylation site (N-linked (GlcNAc...) asparagine). Catalysis depends on residues Asp239 and His291.

The protein belongs to the peptidase S10 family. In terms of assembly, carboxypeptidase II is a dimer, where each monomer is composed of two chains linked by a disulfide bond. In terms of processing, the linker peptide is endoproteolytically excised during enzyme maturation.

The catalysed reaction is Preferential release of a C-terminal arginine or lysine residue.. In Hordeum vulgare (Barley), this protein is Serine carboxypeptidase II-1 (CXP;2-1).